Consider the following 376-residue polypeptide: uncharacterized protein (376 aa).

The protein belongs to the YCR102c/YLR460c/YNL134c family.

This is an uncharacterized protein from Saccharomyces cerevisiae (strain ATCC 204508 / S288c) (Baker's yeast).